Reading from the N-terminus, the 484-residue chain is MTTSGVRVRIAPSPTGEPHVGTAYIALFNYLFAKKHGGEFILRIEDTDATRSTPEFETKVLDALKWCGLEWKEGPDIGGPYGPYRQSDRKPIYQPYAQELLDKGHAFRCFCTPARLEQMREAQRAAGKPPKYDGLCLSLTAEEVTSRTAAGEASVIRMKIPPEGSCDFTDGVYGDVSIPWDSVDMQVLIKADGMPTYHMANVIDDHLMKITHVARGEEWLASVPKHILLYRYFGWDQPVFMHLSLMRNADKSKLSKRKNPTSISYYSALGYIPEALMNFLGLFFIQIAEGEELLTMDELSEKFDPDNLSKAGAIFDIQKLDWLNGRWIREKLSEEEFQARVLAWAMENDRLKAGLRLSQTRISKLGELPDLAGFLLKSDLGLQPSDFAKIKSPPEEILEILNTVQPDLEKILEWNVETIEAELRAISDRMGKKLKVVVSPLFVAVSGSPRSLPLFDSMAILGRSVVRQRLKLAAQAVAALVGAK.

The 'HIGH' region signature appears at 12–22 (PSPTGEPHVGT). Residues 253-257 (KLSKR) carry the 'KMSKS' region motif. An ATP-binding site is contributed by Lys256.

The protein belongs to the class-I aminoacyl-tRNA synthetase family. Glutamate--tRNA ligase type 1 subfamily. Monomer.

Its subcellular location is the cytoplasm. The enzyme catalyses tRNA(Glu) + L-glutamate + ATP = L-glutamyl-tRNA(Glu) + AMP + diphosphate. In terms of biological role, catalyzes the attachment of glutamate to tRNA(Glu) in a two-step reaction: glutamate is first activated by ATP to form Glu-AMP and then transferred to the acceptor end of tRNA(Glu). This is Glutamate--tRNA ligase from Rhizobium etli (strain CIAT 652).